Reading from the N-terminus, the 216-residue chain is GTP cyclohydrolase-2 (216 aa).

50–54 provides a ligand contact to GTP; that stretch reads RIHSE. Residues Cys55, Cys66, and Cys68 each contribute to the Zn(2+) site. Residues Gln71, 93-95, and Thr115 each bind GTP; that span reads EGR. Asp127 (proton acceptor) is an active-site residue. Arg129 functions as the Nucleophile in the catalytic mechanism. GTP-binding residues include Thr150 and Lys155.

This sequence belongs to the GTP cyclohydrolase II family. The cofactor is Zn(2+).

The catalysed reaction is GTP + 4 H2O = 2,5-diamino-6-hydroxy-4-(5-phosphoribosylamino)-pyrimidine + formate + 2 phosphate + 3 H(+). It functions in the pathway cofactor biosynthesis; riboflavin biosynthesis; 5-amino-6-(D-ribitylamino)uracil from GTP: step 1/4. In terms of biological role, catalyzes the conversion of GTP to 2,5-diamino-6-ribosylamino-4(3H)-pyrimidinone 5'-phosphate (DARP), formate and pyrophosphate. The chain is GTP cyclohydrolase-2 from Histophilus somni (strain 129Pt) (Haemophilus somnus).